The sequence spans 394 residues: Elongation factor Tu (394 aa).

The tr-type G domain occupies 10–204 (KLHINVGTIG…VLDSYIPEPK (195 aa)). Residues 19 to 26 (GHVDHGKT) are G1. Position 19 to 26 (19 to 26 (GHVDHGKT)) interacts with GTP. Thr-26 provides a ligand contact to Mg(2+). The segment at 60 to 64 (GITIN) is G2. The tract at residues 81–84 (DCPG) is G3. Residues 81-85 (DCPGH) and 136-139 (NKCD) contribute to the GTP site. The segment at 136–139 (NKCD) is G4. The G5 stretch occupies residues 174 to 176 (SAL).

It belongs to the TRAFAC class translation factor GTPase superfamily. Classic translation factor GTPase family. EF-Tu/EF-1A subfamily. As to quaternary structure, monomer.

Its subcellular location is the cytoplasm. It catalyses the reaction GTP + H2O = GDP + phosphate + H(+). GTP hydrolase that promotes the GTP-dependent binding of aminoacyl-tRNA to the A-site of ribosomes during protein biosynthesis. The polypeptide is Elongation factor Tu (Baumannia cicadellinicola subsp. Homalodisca coagulata).